A 1135-amino-acid polypeptide reads, in one-letter code: Exportin-5 (1135 aa).

An Importin N-terminal domain is found at 32-117; sequence SQVFLEEIKT…KEKLVTILVD (86 aa). The interval 630–631 is pre-siRNA binding; it reads TE.

Belongs to the exportin family. In terms of assembly, found in a nuclear export complex with RanGTP, exportin and pre-miRNA.

The protein resides in the nucleus. It localises to the cytoplasm. Its function is as follows. Mediates the nuclear export of proteins bearing a double-stranded RNA binding domain (dsRBD) and double-stranded RNAs (cargos). Mediates the nuclear export of micro-RNA precursors, which form short hairpins. The polypeptide is Exportin-5 (xpo5) (Dictyostelium discoideum (Social amoeba)).